The sequence spans 24 residues: Erythromycin resistance leader peptide (24 aa).

Residues 1–14 are compositionally biased toward low complexity; it reads MSMGIAARPPRAAL. The disordered stretch occupies residues 1–24; sequence MSMGIAARPPRAALLPPPSVPRSR. Pro residues predominate over residues 15–24; sequence LPPPSVPRSR.

This peptide is involved in the control mechanism of the synthesis of the macrolide-lincosamide-streptogramin B resistance protein. This is Erythromycin resistance leader peptide from Streptomyces fradiae (Streptomyces roseoflavus).